The chain runs to 1222 residues: ATP-dependent helicase/nuclease subunit A (1222 aa).

One can recognise a UvrD-like helicase ATP-binding domain in the interval 39–495 (QKRTAQQIEA…ILLKENFRSQ (457 aa)). 60-67 (ASAGSGKT) contributes to the ATP binding site. One can recognise a UvrD-like helicase C-terminal domain in the interval 524–810 (QLIAGSHAQT…NLMTIHKSKG (287 aa)).

It belongs to the helicase family. AddA subfamily. Heterodimer of AddA and AddB/RexB. The cofactor is Mg(2+).

The catalysed reaction is Couples ATP hydrolysis with the unwinding of duplex DNA by translocating in the 3'-5' direction.. It catalyses the reaction ATP + H2O = ADP + phosphate + H(+). Its function is as follows. The heterodimer acts as both an ATP-dependent DNA helicase and an ATP-dependent, dual-direction single-stranded exonuclease. Recognizes the chi site generating a DNA molecule suitable for the initiation of homologous recombination. The AddA nuclease domain is required for chi fragment generation; this subunit has the helicase and 3' -&gt; 5' nuclease activities. In Streptococcus pyogenes serotype M2 (strain MGAS10270), this protein is ATP-dependent helicase/nuclease subunit A.